A 545-amino-acid polypeptide reads, in one-letter code: Membrane protein insertase YidC (545 aa).

The next 4 membrane-spanning stretches (helical) occupy residues 350-370 (IIGN…AVLY), 424-444 (LPML…FASV), 461-481 (ADPY…QTYL), and 498-518 (PLVF…YWVV).

Belongs to the OXA1/ALB3/YidC family. Type 1 subfamily. As to quaternary structure, interacts with the Sec translocase complex via SecD. Specifically interacts with transmembrane segments of nascent integral membrane proteins during membrane integration.

Its subcellular location is the cell inner membrane. Its function is as follows. Required for the insertion and/or proper folding and/or complex formation of integral membrane proteins into the membrane. Involved in integration of membrane proteins that insert both dependently and independently of the Sec translocase complex, as well as at least some lipoproteins. Aids folding of multispanning membrane proteins. The sequence is that of Membrane protein insertase YidC from Neisseria meningitidis serogroup C (strain 053442).